Here is a 162-residue protein sequence, read N- to C-terminus: Large ribosomal subunit protein uL15 (162 aa).

Basic and acidic residues predominate over residues 1 to 10; it reads MNLNELRDNA. Residues 1–39 form a disordered region; it reads MNLNELRDNAGSRYRKKRLGRGIGSGKGKTSGKGVKGQK. Gly residues predominate over residues 21–35; it reads RGIGSGKGKTSGKGV.

It belongs to the universal ribosomal protein uL15 family. In terms of assembly, part of the 50S ribosomal subunit.

Binds to the 23S rRNA. This chain is Large ribosomal subunit protein uL15, found in Gluconacetobacter diazotrophicus (strain ATCC 49037 / DSM 5601 / CCUG 37298 / CIP 103539 / LMG 7603 / PAl5).